The sequence spans 258 residues: Regulatory protein RecX (258 aa).

The protein belongs to the RecX family.

The protein localises to the cytoplasm. In terms of biological role, modulates RecA activity. This Streptococcus thermophilus (strain CNRZ 1066) protein is Regulatory protein RecX.